The primary structure comprises 206 residues: Large ribosomal subunit protein bL17 (206 aa).

Residues 130-141 (ERARGTRFEARR) are compositionally biased toward basic and acidic residues. Residues 130–206 (ERARGTRFEA…SGAGEQNSAN (77 aa)) are disordered. 2 stretches are compositionally biased toward low complexity: residues 160–181 (TAAAVAVEAAEPAETPAEGAAG) and 189–200 (DDSGIGDDSGAG).

Belongs to the bacterial ribosomal protein bL17 family. Part of the 50S ribosomal subunit. Contacts protein L32.

This chain is Large ribosomal subunit protein bL17, found in Frankia casuarinae (strain DSM 45818 / CECT 9043 / HFP020203 / CcI3).